The chain runs to 126 residues: 13 kDa ribonucleoprotein-associated protein (126 aa).

The protein belongs to the eukaryotic ribosomal protein eL8 family. In terms of assembly, component of the U3 snoRNP particle. Binds to the C'/D and B/C motifs in U3 snoRNA. Component of the 25S U4/U6.U5 tri-snRNP particle, a subcomplex of the spliceosome. Binds to the 5' stem-loop of U4 snRNA.

It is found in the nucleus. The protein localises to the nucleolus. In terms of biological role, common component of the spliceosome and rRNA processing machinery. In association with the spliceosomal U4/U6.U5 tri-snRNP particle, required for splicing of pre-mRNA. In association with box C/D snoRNPs, required for processing of pre-ribosomal RNA (rRNA) and site-specific 2'-O-methylation of substrate RNAs. Essential for the accumulation and stability of U4 snRNA, U6 snRNA, and box C/D snoRNAs. This is 13 kDa ribonucleoprotein-associated protein (SNU13) from Candida glabrata (strain ATCC 2001 / BCRC 20586 / JCM 3761 / NBRC 0622 / NRRL Y-65 / CBS 138) (Yeast).